Consider the following 362-residue polypeptide: tRNA-specific 2-thiouridylase MnmA 1 (362 aa).

Residues Gly12–Ser19 and Met38 each bind ATP. Cys104 functions as the Nucleophile in the catalytic mechanism. A disulfide bridge connects residues Cys104 and Cys200. Residue Gly128 coordinates ATP. The tract at residues Lys150–Gln152 is interaction with tRNA. Cys200 acts as the Cysteine persulfide intermediate in catalysis. An interaction with tRNA region spans residues Arg306 to Tyr307.

This sequence belongs to the MnmA/TRMU family.

The protein localises to the cytoplasm. The enzyme catalyses S-sulfanyl-L-cysteinyl-[protein] + uridine(34) in tRNA + AH2 + ATP = 2-thiouridine(34) in tRNA + L-cysteinyl-[protein] + A + AMP + diphosphate + H(+). Catalyzes the 2-thiolation of uridine at the wobble position (U34) of tRNA, leading to the formation of s(2)U34. The protein is tRNA-specific 2-thiouridylase MnmA 1 of Clostridium tetani (strain Massachusetts / E88).